A 682-amino-acid polypeptide reads, in one-letter code: Zinc finger protein 16 (682 aa).

A compositionally biased stretch (basic and acidic residues) spans 1–10 (MPSLRTRREE). The interval 1 to 43 (MPSLRTRREEAEMELSVPGPSPWTPAAQARVRDAPAVTHPGSA) is disordered. The tract at residues 62–210 (YQQPDCDTRT…GVPTAESPLI (149 aa)) is necessary for transcription activation. Residues 209-231 (LICNECGKTFQGNPDLIQRQIVH) form a C2H2-type 1; degenerate zinc finger. Residues 237-259 (FMCDDCGKTFSQNSVLKNRHRSH) form a C2H2-type 2; degenerate zinc finger. Lysine 253 participates in a covalent cross-link: Glycyl lysine isopeptide (Lys-Gly) (interchain with G-Cter in SUMO2). 8 consecutive C2H2-type zinc fingers follow at residues 265-287 (YQCSECGKAFRGHSDFSRHQSHH), 293-315 (YMCNECGKAFSQNSSLKKHQKSH), 321-343 (YECNECGKAFRRSSNLIQHQRIH), 349-371 (YVCSECGKAFRRSSNLIKHHRTH), 377-399 (FECGECGKAFSQSAHLRKHQRVH), 405-427 (YECNDCGKPFSRVSNLIKHHRVH), 433-455 (YKCSDCGKAFSQSSSLIQHRRIH), and 461-483 (HVCNVCGKAFSYSSVLRKHQIIH). 2 required for nuclear localization regions span residues 268-393 (SECG…AHLR) and 341-373 (RIHSGEKPYVCSECGKAFRRSSNLIKHHRTHTG). Residues 473–503 (SSVLRKHQIIHTGEKPYRCSVCGKAFSHSSA) form a required for nuclear localization region. The residue at position 487 (lysine 487) is an N6-acetyllysine. C2H2-type zinc fingers lie at residues 489-511 (YRCSVCGKAFSHSSALIQHQGVH), 517-539 (YACHECGKTFGRSSNLILHQRVH), 545-567 (YECTECGKTFSQSSTLIQHQRIH), 573-595 (HECNQCGKAFNRSSNLIHHQKVH), 601-623 (YTCVECGKGFSQSSHLIQHQIIH), 629-651 (YKCSECGKAFSQRSVLIQHQRIH), and 657-679 (YDCAACGKAFSQRSKLIKHQLIH).

This sequence belongs to the krueppel C2H2-type zinc-finger protein family. Interacts with INCA1; the interaction inhibits INCA1 activity and induces the cell cycle process. As to expression, ubiquitous.

It localises to the nucleus. Its function is as follows. Acts as a transcriptional activator. Promotes cell proliferation by facilitating the cell cycle phase transition from the S to G2/M phase. Involved in both the hemin- and phorbol myristate acetate (PMA)-induced erythroid and megakaryocytic differentiation, respectively. Also plays a role as an inhibitor of cell apoptosis. The chain is Zinc finger protein 16 (ZNF16) from Homo sapiens (Human).